The following is a 602-amino-acid chain: DEAD-box ATP-dependent RNA helicase 52A (602 aa).

The tract at residues 9–31 is disordered; the sequence is KSVEAGGEPGGGGGGAWSTVSRS. A compositionally biased stretch (gly residues) spans 15-24; that stretch reads GEPGGGGGGA. The short motif at 84–112 is the Q motif element; the sequence is DGFEAAGLVEAVLRNVARCGYESPTPVQR. The Helicase ATP-binding domain occupies 115 to 305; it reads MPIALAGRDL…SDFLSNYIFI (191 aa). 128-135 is a binding site for ATP; that stretch reads AQTGSGKT. The short motif at 249–252 is the DEAD box element; the sequence is DEAD. The Helicase C-terminal domain occupies 328-485; it reads EKRGYLLDLL…DVPDWLVQYA (158 aa). Disordered stretches follow at residues 492–521 and 552–602; these read GSSY…SGGG and RGGG…SGWD. Gly residues predominate over residues 552-574; it reads RGGGYSRGGRGGYSGGGGGGGGD.

The protein belongs to the DEAD box helicase family. DDX3/DED1 subfamily.

It carries out the reaction ATP + H2O = ADP + phosphate + H(+). This Oryza sativa subsp. japonica (Rice) protein is DEAD-box ATP-dependent RNA helicase 52A.